The following is a 263-amino-acid chain: Orotidine 5'-phosphate decarboxylase (263 aa).

Substrate-binding positions include aspartate 38, 60 to 62 (KTH), 91 to 100 (DRKFADIGNT), tyrosine 213, and arginine 232. The active-site Proton donor is lysine 93.

Belongs to the OMP decarboxylase family.

The catalysed reaction is orotidine 5'-phosphate + H(+) = UMP + CO2. It participates in pyrimidine metabolism; UMP biosynthesis via de novo pathway; UMP from orotate: step 2/2. In Rhizomucor pusillus, this protein is Orotidine 5'-phosphate decarboxylase (PYR4).